The chain runs to 390 residues: Isotocin receptor (390 aa).

At 1–48 (MEEMFKEQDFWSFNESSRNSTVGNETFGGNQTVNPLKRNEEVAKVEVT) the chain is on the extracellular side. N-linked (GlcNAc...) asparagine glycosylation is found at Asn14, Asn19, Asn24, and Asn30. Residues 49-69 (VLALVLFLALAGNLCVLIAIY) traverse the membrane as a helical segment. At 70-86 (TAKHTQSRMYYLMKHLS) the chain is on the cytoplasmic side. A helical membrane pass occupies residues 87 to 107 (IADLVVAVFQVLPQLIWDITF). Topologically, residues 108–124 (RFYGPDFLCRLVKYLQT) are extracellular. A disulfide bridge links Cys116 with Cys191. Residues 125–145 (VGMFASTYMLVLMSIDRCIAI) traverse the membrane as a helical segment. The Cytoplasmic segment spans residues 146–160 (CQPLRSLHKRKDRCY). A helical transmembrane segment spans residues 161–181 (VIVSWALSLVFSVPQVYIFSL). Over 182 to 206 (REIGNGVYDCWGDFVQPWGAKAYIT) the chain is Extracellular. The chain crosses the membrane as a helical span at residues 207–227 (WISLTIYIIPVAILGGCYGLI). The Cytoplasmic segment spans residues 228-276 (SFKIWQNFKRKTKKDQCITLTTAASKANALARVSSVKLVSKAKITTVKM). A helical membrane pass occupies residues 277–297 (TFVIVLAYIVCWTPFFFVQMW). The Extracellular segment spans residues 298–311 (SAWDPEAPREAMPF). Residues 312–332 (IISMLLASLNSCCNPWIYMFF) traverse the membrane as a helical segment. The Cytoplasmic portion of the chain corresponds to 333-390 (AGHLFHDLKQSLLCCSTLYLKSSQCRCDQEHDSRKSNCSTYVIKSTSSQRSITQSSIT).

The protein belongs to the G-protein coupled receptor 1 family. Vasopressin/oxytocin receptor subfamily. Expressed in brain, intestine, bladder, skeletal muscle, lateral line, gills and kidney.

It localises to the cell membrane. In terms of biological role, binds to isotocin. Can also be activated by vasotocin, mesotocin, oxytocin and Arg-vasopressin, although these have lower potencies than isotocin. Produces an induction of membrane chloride currents indicating that it is coupled to the inositol phosphate/calcium pathway. The chain is Isotocin receptor from Catostomus commersonii (White sucker).